Reading from the N-terminus, the 114-residue chain is MFAFKKAQRLLKKNDFDFVFESAKKITTDDFIFLFRENKLGYARLGLALSKKMIAKAHDRNRIKRLLRESFRHTNLPAVDIIILARPGLAKKTNLGINTKLNKTWEKLASCYGK.

Belongs to the RnpA family. Consists of a catalytic RNA component (M1 or rnpB) and a protein subunit.

The catalysed reaction is Endonucleolytic cleavage of RNA, removing 5'-extranucleotides from tRNA precursor.. Functionally, RNaseP catalyzes the removal of the 5'-leader sequence from pre-tRNA to produce the mature 5'-terminus. It can also cleave other RNA substrates such as 4.5S RNA. The protein component plays an auxiliary but essential role in vivo by binding to the 5'-leader sequence and broadening the substrate specificity of the ribozyme. The polypeptide is Ribonuclease P protein component (Legionella pneumophila (strain Paris)).